The sequence spans 146 residues: Phospholipase A2, membrane associated (146 aa).

Positions 1 to 21 (MKVLLLLAVVIMAFGSIQVQG) are cleaved as a signal peptide. Cystine bridges form between Cys-47/Cys-139, Cys-49/Cys-65, Cys-64/Cys-119, Cys-70/Cys-146, Cys-71/Cys-112, Cys-80/Cys-105, and Cys-98/Cys-110. His-48, Gly-50, and Gly-52 together coordinate Ca(2+). Residue His-68 is part of the active site. Asp-69 contacts Ca(2+). Asp-113 is a catalytic residue.

This sequence belongs to the phospholipase A2 family. The cofactor is Ca(2+).

The protein localises to the secreted. It is found in the cell membrane. It localises to the mitochondrion outer membrane. It catalyses the reaction a 1,2-diacyl-sn-glycero-3-phosphoethanolamine + H2O = a 1-acyl-sn-glycero-3-phosphoethanolamine + a fatty acid + H(+). The catalysed reaction is 1-hexadecanoyl-2-(9Z-octadecenoyl)-sn-glycero-3-phosphoethanolamine + H2O = 1-hexadecanoyl-sn-glycero-3-phosphoethanolamine + (9Z)-octadecenoate + H(+). The enzyme catalyses 1-hexadecanoyl-2-(9Z,12Z-octadecadienoyl)-sn-glycero-3-phosphoethanolamine + H2O = 1-hexadecanoyl-sn-glycero-3-phosphoethanolamine + (9Z,12Z)-octadecadienoate + H(+). It carries out the reaction 1-hexadecanoyl-2-(5Z,8Z,11Z,14Z-eicosatetraenoyl)-sn-glycero-3-phosphoethanolamine + H2O = 1-hexadecanoyl-sn-glycero-3-phosphoethanolamine + (5Z,8Z,11Z,14Z)-eicosatetraenoate + H(+). It catalyses the reaction N-hexadecanoyl-1,2-di-(9Z-octadecenoyl)-sn-glycero-3-phosphoethanolamine + H2O = N-hexadecanoyl-1-(9Z-octadecenoyl)-sn-glycero-3-phosphoethanolamine + (9Z)-octadecenoate + H(+). The catalysed reaction is 1,2-dihexadecanoyl-sn-glycero-3-phospho-(1'-sn-glycerol) + H2O = 1-hexadecanoyl-sn-glycero-3-phospho-(1'-sn-glycerol) + hexadecanoate + H(+). The enzyme catalyses 1-hexadecanoyl-2-(9Z-octadecenoyl)-sn-glycero-3-phosphoglycerol + H2O = 1-hexadecanoyl-sn-glycero-3-phosphoglycerol + (9Z)-octadecenoate + H(+). It carries out the reaction 1-hexadecanoyl-2-(9Z-octadecenoyl)-sn-glycero-3-phospho-(1'-sn-glycerol) + H2O = 1-hexadecanoyl-sn-glycero-3-phospho-(1'-sn-glycerol) + (9Z)-octadecenoate + H(+). It catalyses the reaction a 1,2-diacyl-sn-glycero-3-phosphocholine + H2O = a 1-acyl-sn-glycero-3-phosphocholine + a fatty acid + H(+). The catalysed reaction is 1,2-dihexadecanoyl-sn-glycero-3-phosphocholine + H2O = 1-hexadecanoyl-sn-glycero-3-phosphocholine + hexadecanoate + H(+). The enzyme catalyses 1-hexadecanoyl-2-(9Z-octadecenoyl)-sn-glycero-3-phosphocholine + H2O = 1-hexadecanoyl-sn-glycero-3-phosphocholine + (9Z)-octadecenoate + H(+). It carries out the reaction 1-hexadecanoyl-2-(9Z,12Z-octadecadienoyl)-sn-glycero-3-phosphocholine + H2O = (9Z,12Z)-octadecadienoate + 1-hexadecanoyl-sn-glycero-3-phosphocholine + H(+). It catalyses the reaction 1-hexadecanoyl-2-(4Z,7Z,10Z,13Z,16Z,19Z-docosahexaenoyl)-sn-glycero-3-phosphocholine + H2O = (4Z,7Z,10Z,13Z,16Z,19Z)-docosahexaenoate + 1-hexadecanoyl-sn-glycero-3-phosphocholine + H(+). Secretory calcium-dependent phospholipase A2 that primarily targets extracellular phospholipids with implications in host antimicrobial defense, inflammatory response and tissue regeneration. Hydrolyzes the ester bond of the fatty acyl group attached at sn-2 position of phospholipids (phospholipase A2 activity) with preference for phosphatidylethanolamines and phosphatidylglycerols over phosphatidylcholines. Contributes to lipid remodeling of cellular membranes and generation of lipid mediators involved in pathogen clearance. Displays bactericidal activity against Gram-positive bacteria by directly hydrolyzing phospholipids of the bacterial membrane. Upon sterile inflammation, targets membrane phospholipids of extracellular mitochondria released from activated platelets, generating free unsaturated fatty acids such as arachidonate that is used by neighboring leukocytes to synthesize inflammatory eicosanoids such as leukotrienes. Simultaneously, by compromising mitochondrial membrane integrity, promotes the release in circulation of potent damage-associated molecular pattern molecules that activate the innate immune response. Plays a stem cell regulator role in the intestinal crypt. Within intracellular compartment mediates Paneth cell differentiation and its stem cell supporting functions by inhibiting Wnt signaling pathway in intestinal stem cell (ICS). Secreted in the intestinal lumen upon inflammation, acts in an autocrine way and promotes prostaglandin E2 synthesis that stimulates Wnt signaling pathway in ICS cells and tissue regeneration. May play a role in the biosynthesis of N-acyl ethanolamines that regulate energy metabolism and inflammation. Hydrolyzes N-acyl phosphatidylethanolamines to N-acyl lysophosphatidylethanolamines, which are further cleaved by a lysophospholipase D to release N-acyl ethanolamines. Independent of its catalytic activity, acts as a ligand for integrins. Binds to and activates integrins ITGAV:ITGB3, ITGA4:ITGB1 and ITGA5:ITGB1. Binds to a site (site 2) which is distinct from the classical ligand-binding site (site 1) and induces integrin conformational changes and enhanced ligand binding to site 1. Induces cell proliferation in an integrin-dependent manner. The polypeptide is Phospholipase A2, membrane associated (Pla2g2a) (Rattus norvegicus (Rat)).